The chain runs to 264 residues: Hemin import ATP-binding protein HmuV (264 aa).

One can recognise an ABC transporter domain in the interval 2–241 (IEVSGLSVRL…ATMLSVFGCA (240 aa)). 34–41 (GPNGSGKT) is an ATP binding site.

Belongs to the ABC transporter superfamily. Heme (hemin) importer (TC 3.A.1.14.5) family. As to quaternary structure, the complex is composed of two ATP-binding proteins (HmuV), two transmembrane proteins (HmuU) and a solute-binding protein (HmuT).

The protein resides in the cell inner membrane. Its function is as follows. Part of the ABC transporter complex HmuTUV involved in hemin import. Responsible for energy coupling to the transport system. The sequence is that of Hemin import ATP-binding protein HmuV from Rhizobium etli (strain ATCC 51251 / DSM 11541 / JCM 21823 / NBRC 15573 / CFN 42).